Reading from the N-terminus, the 482-residue chain is Putative metallophosphoesterase F40B5.2 (482 aa).

4 helical membrane-spanning segments follow: residues 15–35, 129–149, 156–176, and 205–225; these read MNLK…SIAI, ALMM…YIFL, IAIT…FLLI, and CYHI…GLYT. A divalent metal cation is bound by residues D256, H258, D288, N319, H421, and H423.

This sequence belongs to the metallophosphoesterase superfamily. LOC643853 family.

It is found in the membrane. The sequence is that of Putative metallophosphoesterase F40B5.2 from Caenorhabditis elegans.